The following is a 253-amino-acid chain: Isoprenyl transferase (253 aa).

The active site involves aspartate 30. Mg(2+) is bound at residue aspartate 30. Substrate is bound by residues 31 to 34 (GNRR), tryptophan 35, histidine 51, and 79 to 81 (STE). Asparagine 82 functions as the Proton acceptor in the catalytic mechanism. Residues phenylalanine 83, arginine 85, arginine 202, and 208 to 210 (RVS) each bind substrate. Mg(2+) is bound at residue glutamate 221.

Belongs to the UPP synthase family. Homodimer. It depends on Mg(2+) as a cofactor.

Catalyzes the condensation of isopentenyl diphosphate (IPP) with allylic pyrophosphates generating different type of terpenoids. This is Isoprenyl transferase from Chlamydia muridarum (strain MoPn / Nigg).